Consider the following 116-residue polypeptide: Large ribosomal subunit protein uL18 (116 aa).

The protein belongs to the universal ribosomal protein uL18 family. As to quaternary structure, part of the 50S ribosomal subunit; part of the 5S rRNA/L5/L18/L25 subcomplex. Contacts the 5S and 23S rRNAs.

Functionally, this is one of the proteins that bind and probably mediate the attachment of the 5S RNA into the large ribosomal subunit, where it forms part of the central protuberance. The protein is Large ribosomal subunit protein uL18 of Pseudomonas fluorescens (strain ATCC BAA-477 / NRRL B-23932 / Pf-5).